The sequence spans 257 residues: Probable dihydroorotate dehydrogenase B (NAD(+)), electron transfer subunit (257 aa).

The region spanning Glu-2–Pro-89 is the FAD-binding FR-type domain. Residues Cys-208, Cys-213, Cys-216, and Cys-226 each contribute to the [2Fe-2S] cluster site.

Belongs to the PyrK family. Heterotetramer of 2 PyrK and 2 PyrD type B subunits. The cofactor is [2Fe-2S] cluster. Requires FAD as cofactor.

The protein operates within pyrimidine metabolism; UMP biosynthesis via de novo pathway; orotate from (S)-dihydroorotate (NAD(+) route): step 1/1. Responsible for channeling the electrons from the oxidation of dihydroorotate from the FMN redox center in the PyrD type B subunit to the ultimate electron acceptor NAD(+). The sequence is that of Probable dihydroorotate dehydrogenase B (NAD(+)), electron transfer subunit from Methanocaldococcus jannaschii (strain ATCC 43067 / DSM 2661 / JAL-1 / JCM 10045 / NBRC 100440) (Methanococcus jannaschii).